Here is a 343-residue protein sequence, read N- to C-terminus: MKNLLDLSYEELVTEITNLGLERYRADQILDWVFDKKVNNFDEMTNLSKKHRALLKEHFSISFLKLLDKKVSRIDGTTKFLWELEDGNTIESVMLFHPDRITACISTQVGCPVKCIFCATGMSGFVRNLTTGEIVAQILSMEKEEKKKIGNVVYMGMGEPLLNYENTIKSIRILNHKKMGNIGIRRITISTVGIPDRIIQLAEEGLDVKLALSLHAPTNFKRDQLVPLNKKYSIEEILNAVKIYQRKTGNRVTIEYVLIRGINDEISDAKKLAEILRNMKVFVNLIPVNPTVEGLRRPSRERLLTFKRILLENGIEAEIRREKGTDIEAACGQLRLKRIKSRS.

Glu91 functions as the Proton acceptor in the catalytic mechanism. The Radical SAM core domain occupies 97–326 (HPDRITACIS…AEIRREKGTD (230 aa)). Cys104 and Cys331 are oxidised to a cystine. [4Fe-4S] cluster contacts are provided by Cys111, Cys115, and Cys118. S-adenosyl-L-methionine-binding positions include 158–159 (GE), Ser190, 213–215 (SLH), and Asn289. Residue Cys331 is the S-methylcysteine intermediate of the active site.

It belongs to the radical SAM superfamily. RlmN family. It depends on [4Fe-4S] cluster as a cofactor.

It is found in the cytoplasm. It carries out the reaction adenosine(2503) in 23S rRNA + 2 reduced [2Fe-2S]-[ferredoxin] + 2 S-adenosyl-L-methionine = 2-methyladenosine(2503) in 23S rRNA + 5'-deoxyadenosine + L-methionine + 2 oxidized [2Fe-2S]-[ferredoxin] + S-adenosyl-L-homocysteine. The enzyme catalyses adenosine(37) in tRNA + 2 reduced [2Fe-2S]-[ferredoxin] + 2 S-adenosyl-L-methionine = 2-methyladenosine(37) in tRNA + 5'-deoxyadenosine + L-methionine + 2 oxidized [2Fe-2S]-[ferredoxin] + S-adenosyl-L-homocysteine. In terms of biological role, specifically methylates position 2 of adenine 2503 in 23S rRNA and position 2 of adenine 37 in tRNAs. This chain is Probable dual-specificity RNA methyltransferase RlmN, found in Thermotoga maritima (strain ATCC 43589 / DSM 3109 / JCM 10099 / NBRC 100826 / MSB8).